Consider the following 454-residue polypeptide: Bifunctional protein GlmU (454 aa).

Residues 1 to 226 (MALNVVILAA…AIEVEGANNR (226 aa)) are pyrophosphorylase. UDP-N-acetyl-alpha-D-glucosamine is bound by residues 8-11 (LAAG), Lys22, Gln73, 78-79 (GT), 100-102 (YGD), Gly137, Glu151, Asn166, and Asn224. Asp102 is a binding site for Mg(2+). Asn224 lines the Mg(2+) pocket. Residues 227-247 (VQLAQLERAYQAREAEKLMIA) are linker. Positions 248-454 (GANLRDPSRI…GWQRPVKIKK (207 aa)) are N-acetyltransferase. UDP-N-acetyl-alpha-D-glucosamine contacts are provided by Arg330 and Lys348. The active-site Proton acceptor is His360. Tyr363 and Asn374 together coordinate UDP-N-acetyl-alpha-D-glucosamine. Residues Ala377, 383-384 (NY), Ser402, Ala420, and Arg437 contribute to the acetyl-CoA site.

This sequence in the N-terminal section; belongs to the N-acetylglucosamine-1-phosphate uridyltransferase family. It in the C-terminal section; belongs to the transferase hexapeptide repeat family. In terms of assembly, homotrimer. The cofactor is Mg(2+).

It localises to the cytoplasm. It carries out the reaction alpha-D-glucosamine 1-phosphate + acetyl-CoA = N-acetyl-alpha-D-glucosamine 1-phosphate + CoA + H(+). It catalyses the reaction N-acetyl-alpha-D-glucosamine 1-phosphate + UTP + H(+) = UDP-N-acetyl-alpha-D-glucosamine + diphosphate. Its pathway is nucleotide-sugar biosynthesis; UDP-N-acetyl-alpha-D-glucosamine biosynthesis; N-acetyl-alpha-D-glucosamine 1-phosphate from alpha-D-glucosamine 6-phosphate (route II): step 2/2. It functions in the pathway nucleotide-sugar biosynthesis; UDP-N-acetyl-alpha-D-glucosamine biosynthesis; UDP-N-acetyl-alpha-D-glucosamine from N-acetyl-alpha-D-glucosamine 1-phosphate: step 1/1. It participates in bacterial outer membrane biogenesis; LPS lipid A biosynthesis. Functionally, catalyzes the last two sequential reactions in the de novo biosynthetic pathway for UDP-N-acetylglucosamine (UDP-GlcNAc). The C-terminal domain catalyzes the transfer of acetyl group from acetyl coenzyme A to glucosamine-1-phosphate (GlcN-1-P) to produce N-acetylglucosamine-1-phosphate (GlcNAc-1-P), which is converted into UDP-GlcNAc by the transfer of uridine 5-monophosphate (from uridine 5-triphosphate), a reaction catalyzed by the N-terminal domain. This Shewanella oneidensis (strain ATCC 700550 / JCM 31522 / CIP 106686 / LMG 19005 / NCIMB 14063 / MR-1) protein is Bifunctional protein GlmU.